Reading from the N-terminus, the 248-residue chain is Mannose-binding protein C (248 aa).

A signal peptide spans 1-20 (MSLIPSLSLLLMSMVAASYS). The region spanning 42–99 (GINGFPGKDGRDGTKGEKGEPGQGLRGLQGPPGKLGPPGNPGPSGSPGPKGQKGDPGN) is the Collagen-like domain. A disordered region spans residues 43 to 110 (INGFPGKDGR…PDCDSSLAVS (68 aa)). The residue at position 47 (Pro-47) is a 4-hydroxyproline. The segment covering 49 to 61 (KDGRDGTKGEKGE) has biased composition (basic and acidic residues). 4-hydroxyproline is present on residues Pro-73, Pro-79, Pro-82, and Pro-88. The span at 75-87 (KLGPPGNPGPSGS) shows a compositional bias: pro residues. A coiled-coil region spans residues 112–130 (RKALQTEMARIKKWLTFSL). The region spanning 134-245 (VGNKFFLTNG…CSSSHLAVCE (112 aa)) is the C-type lectin domain. Intrachain disulfides connect Cys-155/Cys-244 and Cys-222/Cys-236.

In terms of assembly, oligomeric complex of 3 or more homotrimers. Interacts with MASP1 and MASP2. Interacts with MEP1A and MEP1B and may inhibit their catalytic activity. Hydroxylation on proline residues within the sequence motif, GXPG, is most likely to be 4-hydroxy as this fits the requirement for 4-hydroxylation in vertebrates.

It localises to the secreted. Calcium-dependent lectin involved in innate immune defense. Binds mannose, fucose and N-acetylglucosamine on different microorganisms and activates the lectin complement pathway. Binds to late apoptotic cells, as well as to apoptotic blebs and to necrotic cells, but not to early apoptotic cells, facilitating their uptake by macrophages. This is Mannose-binding protein C (MBL2) from Nomascus concolor (Black crested gibbon).